We begin with the raw amino-acid sequence, 234 residues long: Melanoregulin (234 aa).

Positions 215–234 (MNQNISGGEDEDEDESEPDD) are disordered. Residues 222–234 (GEDEDEDESEPDD) show a composition bias toward acidic residues.

This sequence belongs to the melanoregulin family.

It localises to the apical cell membrane. It is found in the melanosome membrane. Its subcellular location is the lysosome membrane. The protein resides in the cytoplasmic vesicle membrane. Its function is as follows. Probably functions as a cargo-recognition protein that couples cytoplasmic vesicles to the transport machinery. Contributes to retrograde melanosome transport from the cell periphery to the center. Overexpression causes accumulation of late endosomes and/or lysosomes at the microtubule organising center (MTOC) at the center of the cell. Probably binds cholesterol and requires the presence of cholesterol in membranes to function in microtubule-mediated retrograde organelle transport. Binds phosphatidylinositol 3-phosphate, phosphatidylinositol 4-phosphate, phosphatidylinositol 5-phosphate and phosphatidylinositol 3,5-bisphosphate. This is Melanoregulin (mreg) from Danio rerio (Zebrafish).